Consider the following 457-residue polypeptide: Secreted RxLR effector protein 8 (457 aa).

An N-terminal signal peptide occupies residues 1–19 (MRGTLATALLLVISSRVAT). The RxLR-dEER motif lies at 48 to 69 (RFLRGSRKQRDDLAPTAADENR). The N-linked (GlcNAc...) asparagine glycan is linked to asparagine 68. Disordered regions lie at residues 110 to 188 (RLSL…ALKS) and 398 to 457 (RQTI…RSSS). Residues 135 to 152 (SASTSTTSDIATSSSRTS) are compositionally biased toward low complexity. Composition is skewed to polar residues over residues 153–163 (NQRTPKTQASL) and 176–187 (SKNQFKKSTALK). Over residues 442–457 (IKSKDHARKKRPRSSS) the composition is skewed to basic residues.

The protein belongs to the RxLR effector family.

The protein resides in the secreted. It localises to the host nucleus. In terms of biological role, secreted effector that completely suppresses the host cell death induced by cell death-inducing proteins. In Plasmopara viticola (Downy mildew of grapevine), this protein is Secreted RxLR effector protein 8.